The chain runs to 113 residues: Large ribosomal subunit protein bL17 (113 aa).

It belongs to the bacterial ribosomal protein bL17 family. As to quaternary structure, part of the 50S ribosomal subunit. Contacts protein L32.

This chain is Large ribosomal subunit protein bL17, found in Symbiobacterium thermophilum (strain DSM 24528 / JCM 14929 / IAM 14863 / T).